The chain runs to 398 residues: Serpin-Z2A (398 aa).

Positions Gly-343–Phe-367 are RCL.

It belongs to the serpin family.

Inhibits chymotrypsin and cathepsin G in vitro. This chain is Serpin-Z2A, found in Triticum aestivum (Wheat).